The following is a 434-amino-acid chain: MRLARLLRGGTSVRPLCAVPCASRSLASDSASGSGPASESGVPGQVDFYARFSPSPLSMKQFLDFGSVNACEKTSFMFLRQELPVRLANIMKEISLLPDNLLRTPSVQLVQSWYIQSLQELLDFKDKSAEDAKTIYEFTDTVIRIRNRHNDVIPTMAQGVTEYKESFGVDPVTSQNVQYFLDRFYMSRISIRMLLNQHSLLFGGKGSPSHRKHIGSINPNCDVVEVIKDGYENARRLCDLYYVNSPELELEELNAKSPGQPIQVVYVPSHLYHMVFELFKNAMRATMEHHADKGVYPPIQVHVTLGEEDLTVKMSDRGGGVPLRKIDRLFNYMYSTAPRPRVETSRAVPLAGFGYGLPISRLYAQYFQGDLKLYSLEGYGTDAVIYIKALSTESIERLPVYNKAAWKHYRTNHEADDWCVPSREPKDMTTFRSS.

Residues 1–26 constitute a mitochondrion transit peptide; that stretch reads MRLARLLRGGTSVRPLCAVPCASRSL. Y136 bears the Phosphotyrosine; by FGFR1 mark. A Histidine kinase domain is found at 161–391; that stretch reads TEYKESFGVD…DAVIYIKALS (231 aa). Phosphotyrosine; by FGFR1, ABL1, FLT3 and JAK2 is present on Y241. Y242 bears the Phosphotyrosine; by FGFR1 mark. ATP-binding positions include 277-284, D316, 335-336, and 352-357; these read ELFKNAMR, ST, and GFGYGL. Position 336 is a phosphothreonine (T336). Position 403 is an N6-succinyllysine (K403).

The protein belongs to the PDK/BCKDK protein kinase family. Homodimer, and heterodimer with PDK2. Interacts with the pyruvate dehydrogenase complex subunit DLAT, and is part of the multimeric pyruvate dehydrogenase complex that contains multiple copies of pyruvate dehydrogenase (E1), dihydrolipoamide acetyltransferase (DLAT, E2) and lipoamide dehydrogenase (DLD, E3). Interacts with phosphoglycerate kinase PGK1; the interaction is direct, occurs under hypoxic conditions and leads to PDK1-mediated inhibition of pyruvate dehydrogenase complex activity. In terms of processing, phosphorylated by constitutively activated ABL1, FGFR1, FLT3 and JAK2 (in vitro), and this may also occur in cancer cells that express constitutively activated ABL1, FGFR1, FLT3 and JAK2. Phosphorylation at Tyr-241 and Tyr-242 strongly increases kinase activity, while phosphorylation at Tyr-136 has a lesser effect. Phosphorylated under hypoxic conditions at Thr-336 by phosphoglycerate kinase PGK1 which has an activating effect. Detected in pancreas islets (at protein level). Expressed predominantly in the heart.

It is found in the mitochondrion matrix. The enzyme catalyses L-seryl-[pyruvate dehydrogenase E1 alpha subunit] + ATP = O-phospho-L-seryl-[pyruvate dehydrogenase E1 alpha subunit] + ADP + H(+). With respect to regulation, activated by binding to the pyruvate dehydrogenase complex subunit DLAT. Strongly activated by NADH plus acetyl-coenzyme A. Inhibited by dichloroacetate. Its function is as follows. Kinase that plays a key role in regulation of glucose and fatty acid metabolism and homeostasis via phosphorylation of the pyruvate dehydrogenase subunits PDHA1 and PDHA2. This inhibits pyruvate dehydrogenase activity, and thereby regulates metabolite flux through the tricarboxylic acid cycle, down-regulates aerobic respiration and inhibits the formation of acetyl-coenzyme A from pyruvate. Plays an important role in cellular responses to hypoxia and is important for cell proliferation under hypoxia. The chain is [Pyruvate dehydrogenase (acetyl-transferring)] kinase isozyme 1, mitochondrial (Pdk1) from Rattus norvegicus (Rat).